Reading from the N-terminus, the 272-residue chain is HMP-PP phosphatase (272 aa).

The active-site Nucleophile is D8. D8, D10, and D212 together coordinate Mg(2+).

It belongs to the HAD-like hydrolase superfamily. Cof family. Mg(2+) is required as a cofactor.

The catalysed reaction is 4-amino-2-methyl-5-(diphosphooxymethyl)pyrimidine + H2O = 4-amino-2-methyl-5-(phosphooxymethyl)pyrimidine + phosphate + H(+). Catalyzes the hydrolysis of 4-amino-2-methyl-5-hydroxymethylpyrimidine pyrophosphate (HMP-PP) to 4-amino-2-methyl-5-hydroxymethylpyrimidine phosphate (HMP-P). This Salmonella newport (strain SL254) protein is HMP-PP phosphatase.